A 284-amino-acid polypeptide reads, in one-letter code: F-box protein PP2-B5 (284 aa).

The F-box domain maps to 32-80 (ASFDDLPDDCLAIISSFTSTPRDAFLAALVSKSFGLQFNSDSVWEKFLP).

The sequence is that of F-box protein PP2-B5 (PP2B5) from Arabidopsis thaliana (Mouse-ear cress).